Consider the following 197-residue polypeptide: Beta-crystallin A2 (197 aa).

Residues 1-11 (MSSAPAQGPAP) are N-terminal arm. Beta/gamma crystallin 'Greek key' domains are found at residues 12-52 (ASLT…KVEN) and 53-99 (GAWV…RPVL). The interval 100 to 105 (CANHSD) is connecting peptide. 2 Beta/gamma crystallin 'Greek key' domains span residues 106–147 (SRVT…KVSS) and 148–196 (GAWV…RRVQ).

The protein belongs to the beta/gamma-crystallin family. As to quaternary structure, homo/heterodimer, or complexes of higher-order. The structure of beta-crystallin oligomers seems to be stabilized through interactions between the N-terminal arms.

Functionally, crystallins are the dominant structural components of the vertebrate eye lens. This chain is Beta-crystallin A2 (CRYBA2), found in Bos taurus (Bovine).